The primary structure comprises 512 residues: V-type proton ATPase subunit B (512 aa).

ATP is bound at residue Arg381. A disordered region spans residues 484 to 512 (LYGRDREQDDDEDEDEEDPDKSGDKLIDA). Over residues 491–502 (QDDDEDEDEEDP) the composition is skewed to acidic residues. The segment covering 503–512 (DKSGDKLIDA) has biased composition (basic and acidic residues).

It belongs to the ATPase alpha/beta chains family. V-ATPase is a heteromultimeric enzyme composed of a peripheral catalytic V1 complex (components A to H) attached to an integral membrane V0 proton pore complex (components: a, c, c', c'', d, e, f and VOA1).

The protein localises to the vacuole membrane. Non-catalytic subunit of the V1 complex of vacuolar(H+)-ATPase (V-ATPase), a multisubunit enzyme composed of a peripheral complex (V1) that hydrolyzes ATP and a membrane integral complex (V0) that translocates protons. Plays an important role in resistance to several stresses, as well as in autophagy and virulence. The polypeptide is V-type proton ATPase subunit B (Candida albicans (strain SC5314 / ATCC MYA-2876) (Yeast)).